Reading from the N-terminus, the 687-residue chain is DNA-directed RNA polymerase subunit beta' (687 aa).

Zn(2+)-binding residues include C76, C78, C94, and C97. The Mg(2+) site is built by D496, D498, and D500.

The protein belongs to the RNA polymerase beta' chain family. RpoC1 subfamily. As to quaternary structure, in plastids the minimal PEP RNA polymerase catalytic core is composed of four subunits: alpha, beta, beta', and beta''. When a (nuclear-encoded) sigma factor is associated with the core the holoenzyme is formed, which can initiate transcription. The cofactor is Mg(2+). It depends on Zn(2+) as a cofactor.

It is found in the plastid. Its subcellular location is the chloroplast. The catalysed reaction is RNA(n) + a ribonucleoside 5'-triphosphate = RNA(n+1) + diphosphate. DNA-dependent RNA polymerase catalyzes the transcription of DNA into RNA using the four ribonucleoside triphosphates as substrates. The polypeptide is DNA-directed RNA polymerase subunit beta' (Ipomoea purpurea (Common morning glory)).